Consider the following 832-residue polypeptide: Disintegrin and metalloproteinase domain-containing protein 23 (832 aa).

Polar residues predominate over residues 1–10 (MKPPGSSSRQ). The disordered stretch occupies residues 1 to 37 (MKPPGSSSRQPPLAGCSLAGASCGPQRGPAGSVPASA). The signal sequence occupies residues 1–59 (MKPPGSSSRQPPLAGCSLAGASCGPQRGPAGSVPASAPARTPPCRLLLVLLLLPPLAAS). Residues 28–37 (GPAGSVPASA) show a composition bias toward low complexity. Positions 60 to 286 (SRPRAWGAAA…ELQWLKRRKR (227 aa)) are excised as a propeptide. N-linked (GlcNAc...) asparagine glycosylation is found at N76, N96, N100, and N263. The Extracellular portion of the chain corresponds to 287 to 792 (AVNPSRGIFE…EGPKGPSATN (506 aa)). The 198-residue stretch at 299 to 496 (KYLELMIVND…GGGACLFNRP (198 aa)) folds into the Peptidase M12B domain. Cystine bridges form between C408–C491, C450–C475, and C452–C459. Positions 502–588 (PTECGNGYVE…QCPPNLHKQD (87 aa)) constitute a Disintegrin domain. N-linked (GlcNAc...) asparagine glycans are attached at residues N547 and N548. The cysteines at positions 560 and 580 are disulfide-linked. The tract at residues 563–568 (AVNECD) is may bind the integrin receptor. Residues N664 and N732 are each glycosylated (N-linked (GlcNAc...) asparagine). The region spanning 732–769 (NMSSCPLDSKGKVCSGHGVCSNEATCICDFTWAGTDCS) is the EGF-like domain. Disulfide bonds link C736-C751, C745-C757, and C759-C768. A helical transmembrane segment spans residues 793-813 (LIIGSIAGAILVAAIVLGGTG). Residues 814–832 (WGFKNVKKRRFDPTQQGPI) lie on the Cytoplasmic side of the membrane.

Can bind to LGI1 and LGI4. Ligand for integrin alpha-V/beta-3. Highly expressed in the brain and weakly expressed in the heart. In the brain, expressed prominently in the amygdala, caudate nucleus, hypothalamus, thalamus, cerebral cortex and occipital pole.

It localises to the cell membrane. Its subcellular location is the secreted. Its function is as follows. May play a role in cell-cell and cell-matrix interactions. This is a non-catalytic metalloprotease-like protein. This Homo sapiens (Human) protein is Disintegrin and metalloproteinase domain-containing protein 23 (ADAM23).